Reading from the N-terminus, the 1043-residue chain is Phosphatidylinositol 4,5-bisphosphate 3-kinase catalytic subunit delta isoform (1043 aa).

One can recognise a PI3K-ABD domain in the interval 16-105 (ESQSVVVDFL…LPVLRLVARE (90 aa)). The 92-residue stretch at 187–278 (NRALLVNVKF…GLTPHLTMVH (92 aa)) folds into the PI3K-RBD domain. The interval 287–312 (DEQSNPAPQVQKPRAKPPPIPAKKPS) is disordered. A C2 PI3K-type domain is found at 319 to 476 (LEQPFSIELI…SAAALVIYLP (158 aa)). Residues 496-673 (RHGERGRITE…GLIMEAYCRG (178 aa)) enclose the PIK helical domain. At Tyr-523 the chain carries Phosphotyrosine. One can recognise a PI3K/PI4K catalytic domain in the interval 744 to 1026 (CVEQCTFMDS…KFNEALRESW (283 aa)). Positions 750–756 (FMDSKMK) are G-loop. Residues 889–897 (GIGDRHSDN) form a catalytic loop region. Residues 908 to 934 (HIDFGHFLGNFKTKFGINRERVPFILT) form an activation loop region. Position 1038 is a phosphoserine; by autocatalysis (Ser-1038).

It belongs to the PI3/PI4-kinase family. Heterodimer of a catalytic subunit PIK3CD and a p85 regulatory subunit (PIK3R1, PIK3R2 or PIK3R3). Interacts with ERAS and HRAS. Post-translationally, autophosphorylation on Ser-1038 results in the almost complete inactivation of the lipid kinase activity. Abundantly expressed in adult mouse spleen as well as in testis. Isoform 1 is expressed in spleen and lung (at protein level). Isoform 1 is expressed predominantly in leukocytes.

Its subcellular location is the cytoplasm. It carries out the reaction a 1,2-diacyl-sn-glycero-3-phospho-(1D-myo-inositol-4,5-bisphosphate) + ATP = a 1,2-diacyl-sn-glycero-3-phospho-(1D-myo-inositol-3,4,5-trisphosphate) + ADP + H(+). The catalysed reaction is a 1,2-diacyl-sn-glycero-3-phospho-(1D-myo-inositol) + ATP = a 1,2-diacyl-sn-glycero-3-phospho-(1D-myo-inositol-3-phosphate) + ADP + H(+). It catalyses the reaction 1-octadecanoyl-2-(5Z,8Z,11Z,14Z)-eicosatetraenoyl-sn-glycero-3-phospho-1D-myo-inositol 4,5-bisphosphate + ATP = 1-octadecanoyl-2-(5Z,8Z,11Z,14Z-eicosatetraenoyl)-sn-glycero-3-phospho-(1D-myo-inositol 3,4,5-triphosphate) + ADP + H(+). The protein operates within phospholipid metabolism; phosphatidylinositol phosphate biosynthesis. With respect to regulation, activated by growth factors and cytokine receptors through a tyrosine-kinase-dependent mechanism. Activated by RAS. IC87114 inhibits lipid kinase activity and is selective in cells at doses up to 5-10 uM. Among other effects, IC87114 reduces allergic responses, prevents the recruitment of antigen-specific T cells into target tissue, and affects natural killer cell chemotaxis. In terms of biological role, phosphoinositide-3-kinase (PI3K) phosphorylates phosphatidylinositol (PI) and its phosphorylated derivatives at position 3 of the inositol ring to produce 3-phosphoinositides. Uses ATP and PtdIns(4,5)P2 (phosphatidylinositol 4,5-bisphosphate) to generate phosphatidylinositol 3,4,5-trisphosphate (PIP3). PIP3 plays a key role by recruiting PH domain-containing proteins to the membrane, including AKT1 and PDPK1, activating signaling cascades involved in cell growth, survival, proliferation, motility and morphology. Mediates immune responses. Plays a role in B-cell development, proliferation, migration, and function. Required for B-cell receptor (BCR) signaling. Mediates B-cell proliferation response to anti-IgM, anti-CD40 and IL4 stimulation. Promotes cytokine production in response to TLR4 and TLR9. Required for antibody class switch mediated by TLR9. Involved in the antigen presentation function of B-cells. Involved in B-cell chemotaxis in response to CXCL13 and sphingosine 1-phosphate (S1P). Required for proliferation, signaling and cytokine production of naive, effector and memory T-cells. Required for T-cell receptor (TCR) signaling. Mediates TCR signaling events at the immune synapse. Activation by TCR leads to antigen-dependent memory T-cell migration and retention to antigenic tissues. Together with PIK3CG participates in T-cell development. Contributes to T-helper cell expansion and differentiation. Required for T-cell migration mediated by homing receptors SELL/CD62L, CCR7 and S1PR1 and antigen dependent recruitment of T-cells. Together with PIK3CG is involved in natural killer (NK) cell development and migration towards the sites of inflammation. Participates in NK cell receptor activation. Plays a role in NK cell maturation and cytokine production. Together with PIK3CG is involved in neutrophil chemotaxis and extravasation. Together with PIK3CG participates in neutrophil respiratory burst. Plays important roles in mast-cell development and mast cell mediated allergic response. Involved in stem cell factor (SCF)-mediated proliferation, adhesion and migration. Required for allergen-IgE-induced degranulation and cytokine release. The lipid kinase activity is required for its biological function. The polypeptide is Phosphatidylinositol 4,5-bisphosphate 3-kinase catalytic subunit delta isoform (Pik3cd) (Mus musculus (Mouse)).